We begin with the raw amino-acid sequence, 127 residues long: Large ribosomal subunit protein bL12 (127 aa).

It belongs to the bacterial ribosomal protein bL12 family. Homodimer. Part of the ribosomal stalk of the 50S ribosomal subunit. Forms a multimeric L10(L12)X complex, where L10 forms an elongated spine to which 2 to 4 L12 dimers bind in a sequential fashion. Binds GTP-bound translation factors.

Its function is as follows. Forms part of the ribosomal stalk which helps the ribosome interact with GTP-bound translation factors. Is thus essential for accurate translation. The protein is Large ribosomal subunit protein bL12 of Acidiphilium cryptum (strain JF-5).